The chain runs to 548 residues: CTP synthase (548 aa).

The interval 1 to 270 (MNRRSCAFIF…DTKISALLGC (270 aa)) is amidoligase domain. CTP is bound at residue S17. S17 is a UTP binding site. ATP contacts are provided by residues 18–23 (SIGKGL) and D75. D75 and E143 together coordinate Mg(2+). Residues 150–152 (DIE), 190–195 (KTKPSQ), and K227 each bind CTP. Residues 190–195 (KTKPSQ) and K227 each bind UTP. The Glutamine amidotransferase type-1 domain occupies 305-548 (YSGLCDAYIS…VRAGLLRKYS (244 aa)). An L-glutamine-binding site is contributed by G356. C383 (nucleophile; for glutamine hydrolysis) is an active-site residue. L-glutamine is bound by residues 384–387 (FGFQ), E407, and R475. Residues H521 and E523 contribute to the active site.

This sequence belongs to the CTP synthase family. As to quaternary structure, homotetramer.

It carries out the reaction UTP + L-glutamine + ATP + H2O = CTP + L-glutamate + ADP + phosphate + 2 H(+). The enzyme catalyses L-glutamine + H2O = L-glutamate + NH4(+). It catalyses the reaction UTP + NH4(+) + ATP = CTP + ADP + phosphate + 2 H(+). Its pathway is pyrimidine metabolism; CTP biosynthesis via de novo pathway; CTP from UDP: step 2/2. With respect to regulation, allosterically activated by GTP, when glutamine is the substrate; GTP has no effect on the reaction when ammonia is the substrate. The allosteric effector GTP functions by stabilizing the protein conformation that binds the tetrahedral intermediate(s) formed during glutamine hydrolysis. Inhibited by the product CTP, via allosteric rather than competitive inhibition. In terms of biological role, catalyzes the ATP-dependent amination of UTP to CTP with either L-glutamine or ammonia as the source of nitrogen. Regulates intracellular CTP levels through interactions with the four ribonucleotide triphosphates. This Neorickettsia sennetsu (strain ATCC VR-367 / Miyayama) (Ehrlichia sennetsu) protein is CTP synthase.